Consider the following 374-residue polypeptide: Carbamoyl phosphate synthase small chain (374 aa).

The interval 1-183 (MVLADGQMIW…QNGYSVVDNQ (183 aa)) is CPSase. Residues S41, G235, and G237 each coordinate L-glutamine. Residues 187-374 (HVVAIDYGLK…FIDLIAKERP (188 aa)) form the Glutamine amidotransferase type-1 domain. Catalysis depends on C264, which acts as the Nucleophile. 5 residues coordinate L-glutamine: L265, Q268, N306, G308, and F309. Catalysis depends on residues H348 and E350.

The protein belongs to the CarA family. In terms of assembly, composed of two chains; the small (or glutamine) chain promotes the hydrolysis of glutamine to ammonia, which is used by the large (or ammonia) chain to synthesize carbamoyl phosphate. Tetramer of heterodimers (alpha,beta)4.

The enzyme catalyses hydrogencarbonate + L-glutamine + 2 ATP + H2O = carbamoyl phosphate + L-glutamate + 2 ADP + phosphate + 2 H(+). It catalyses the reaction L-glutamine + H2O = L-glutamate + NH4(+). It participates in amino-acid biosynthesis; L-arginine biosynthesis; carbamoyl phosphate from bicarbonate: step 1/1. It functions in the pathway pyrimidine metabolism; UMP biosynthesis via de novo pathway; (S)-dihydroorotate from bicarbonate: step 1/3. Its function is as follows. Small subunit of the glutamine-dependent carbamoyl phosphate synthetase (CPSase). CPSase catalyzes the formation of carbamoyl phosphate from the ammonia moiety of glutamine, carbonate, and phosphate donated by ATP, constituting the first step of 2 biosynthetic pathways, one leading to arginine and/or urea and the other to pyrimidine nucleotides. The small subunit (glutamine amidotransferase) binds and cleaves glutamine to supply the large subunit with the substrate ammonia. The polypeptide is Carbamoyl phosphate synthase small chain (Zymomonas mobilis subsp. mobilis (strain ATCC 31821 / ZM4 / CP4)).